A 78-amino-acid chain; its full sequence is Large ribosomal subunit protein bL28 (78 aa).

Belongs to the bacterial ribosomal protein bL28 family.

The sequence is that of Large ribosomal subunit protein bL28 from Gloeothece citriformis (strain PCC 7424) (Cyanothece sp. (strain PCC 7424)).